The following is a 417-amino-acid chain: MKKLEVFGAAKLKGQIRISGSKNASLPILAATLLSNKKISLANLPRVKDIETMILLLKSLGSIIEDNKKELIIKNTKQTKTFAAYSLVKTMRAGILVLGPLLAKFGKAKVSLPGGCAIGTRPVDIHLQALSKLGVKYKIIQGYVHANAPKGLIGANIKFPKVSVGATENLIIAACLAKGKTTLSNCAIEPEIKDLVNFLINMGCNIKWTAKRTVRIEGVNNLKELDYSVMPDRIEAGTYLIAAALTEGNLKITGIDPKIISTEINILKKVGSKITLKKNEILIQGSKKIKNINIKTSPYPGFPTDLQAQMMVLLCKANKRSHIKEEIFENRFMHVAELNRMGAKISINGNQASIEGNIKFEAAELMATDLRASVSLILAALAAKGKSVINRIYHLDRGYEDIEKKLKKVGAKIKRIN.

Residue Lys22 to Asn23 coordinates phosphoenolpyruvate. Residue Arg92 participates in UDP-N-acetyl-alpha-D-glucosamine binding. Cys116 acts as the Proton donor in catalysis. At Cys116 the chain carries 2-(S-cysteinyl)pyruvic acid O-phosphothioketal. UDP-N-acetyl-alpha-D-glucosamine-binding positions include Lys161–Val164, Asp305, and Ile327.

This sequence belongs to the EPSP synthase family. MurA subfamily.

The protein resides in the cytoplasm. It catalyses the reaction phosphoenolpyruvate + UDP-N-acetyl-alpha-D-glucosamine = UDP-N-acetyl-3-O-(1-carboxyvinyl)-alpha-D-glucosamine + phosphate. Its pathway is cell wall biogenesis; peptidoglycan biosynthesis. Its function is as follows. Cell wall formation. Adds enolpyruvyl to UDP-N-acetylglucosamine. The polypeptide is UDP-N-acetylglucosamine 1-carboxyvinyltransferase (Pelagibacter ubique (strain HTCC1062)).